We begin with the raw amino-acid sequence, 499 residues long: Spore germination protein GerQA (499 aa).

3 consecutive transmembrane segments (helical) span residues 285–305, 376–396, and 409–429; these read LFAF…LTYH, SNVL…APIY, and FIIS…SLLL.

This sequence belongs to the GerABKA family.

The protein resides in the membrane. Its function is as follows. Required for the germination response to inosine. Has no role in L-alanine germination. This Bacillus cereus protein is Spore germination protein GerQA (gerQA).